We begin with the raw amino-acid sequence, 1155 residues long: MIKRVHLGQGKAEEILNLPNLIEIQLNSYEKFLQLERLKNNKPLLNEGLESVFRDVFPMKSSNGEVALEYEKYYIEYDSISFTEKECKRKGQSYEAVLKIRLNLQFLTTGEIRQKDVYMGTIPLMTDRGTFIVNGAERVIVSQIHRSPGVVFYKEKDLYYARIIPYRGSWLEFEIDSKKDYLYVKIDRKKRILVTLFLRALGLDTREKIIETFYKIRKIEVNDDTKREITGQYLATNITIKENMTYRAGDKITLQDIEDFLQNGVKEINLIDFDGYDSVPGKHFISSDVILNCFEKEDAYFALKDGFKELSRESVMLAVYSVLLPGEPISIDNAENDLRTIFFSEKRYDLGHVGRYKLSKKFGLDDLTTSVLTMTDIVNTISHLLRIYDGHDVLDDIDHLGNRRVRSVGELLTNIYKGAMSRVEKIAKDRMSNKEVFNLKPQELISVKPVVSAVKEFFATSQLSQFMDQVNPLAELTHKRRLNALGPGGLSRDRAGFEVRDVHYTHYGRMCPIETPEGPNIGLIVSLATYSKVNDYGFLETPYRKVIDGKVTDDIEYLSAIDEEKKCIAQANASVSSDGNYTDDLVSVRISGDYTTMMPKNIDYMDVSPRQLISVSSALIPFLEHNDANRALMGSNMQRQAVPLLFPQPPIVGTGMERIVAKDSGVVIKAKRPGRVVLATNKKIVIKPDNATSERDLDEYELYKYERTNQDTSFNHSVLVKNGQIVNKDEIIADGPATRYGELALGNNLLVGFIPWNGFNYEDAILISERIVKEDLYTSIHIKEFSIEVRETKLGPEKVTADIPNVSGKILSKLDENGIVRIGTYVKPGDILIGKVTPKSEGDITPEFKLLTSIFGEKAKDVKNNSLKVPHGTEGTVIDVQRITKDDVGNLPPGVDEILKVYIAKKRKLKEGDKMAGRHGNKGVVAKILPVEDMPYLADGTPLDICLNPLGVPSRMNIGQLMESQLGLAGKYLGEYYDVPVFESATNECIQEKLKKAGFNETSKAVLYDGYTGEPFENEVMVGVIYMLKLHHLVDDKMHARSTGPYSLVSQQPLGGKAQFGGQRLGEMEVWALEAYGAAHTLQELLTVKSDDMSGRVKIYENIVKGIPTNVSGIPESFNVLMQELRGLGFDLSIYDDNGNQIPLTEKEEELINKT.

This sequence belongs to the RNA polymerase beta chain family. In terms of assembly, the RNAP catalytic core consists of 2 alpha, 1 beta, 1 beta' and 1 omega subunit. When a sigma factor is associated with the core the holoenzyme is formed, which can initiate transcription.

It carries out the reaction RNA(n) + a ribonucleoside 5'-triphosphate = RNA(n+1) + diphosphate. DNA-dependent RNA polymerase catalyzes the transcription of DNA into RNA using the four ribonucleoside triphosphates as substrates. The polypeptide is DNA-directed RNA polymerase subunit beta (Borrelia recurrentis (strain A1)).